Here is a 507-residue protein sequence, read N- to C-terminus: L-amino-acid oxidase (507 aa).

The signal sequence occupies residues 1 to 19 (MNVLFIFSLLFLAALESCA). C29 and C192 are disulfide-bonded. Residues 62–63 (MA), 82–83 (EA), R90, and 106–109 (GPMR) contribute to the FAD site. R109 lines the substrate pocket. N-linked (GlcNAc...) asparagine glycosylation is found at N191 and N213. V280 is an FAD binding site. A disulfide bridge links C348 with C429. The N-linked (GlcNAc...) asparagine glycan is linked to N378. Y389 contributes to the substrate binding site. Residues E473 and 480–485 (GWIDST) each bind FAD.

Belongs to the flavin monoamine oxidase family. FIG1 subfamily. As to quaternary structure, homodimer; non-covalently linked. The cofactor is FAD. In terms of tissue distribution, expressed by the venom gland.

The protein localises to the secreted. The enzyme catalyses an L-alpha-amino acid + O2 + H2O = a 2-oxocarboxylate + H2O2 + NH4(+). It carries out the reaction L-leucine + O2 + H2O = 4-methyl-2-oxopentanoate + H2O2 + NH4(+). Functionally, catalyzes an oxidative deamination of predominantly hydrophobic and aromatic L-amino acids, thus producing hydrogen peroxide that may contribute to the diverse toxic effects of this enzyme. Shows activity on L-Leu. Exhibits diverse biological activities, such as hemorrhage, hemolysis, edema, apoptosis of vascular endothelial cells or tumor cell lines, antibacterial and antiparasitic activities. This protein induces platelet aggregation by both hydrogen peroxide production and binding to platelet membrane proteins (that would enhance the sensitivity of platelets to hydrogen peroxide). Effects of snake L-amino oxidases on platelets are controversial, since they either induce aggregation or inhibit agonist-induced aggregation. These different effects are probably due to different experimental conditions. This Naja atra (Chinese cobra) protein is L-amino-acid oxidase.